The primary structure comprises 119 residues: Large ribosomal subunit protein uL22 (119 aa).

The protein belongs to the universal ribosomal protein uL22 family. Part of the 50S ribosomal subunit.

This protein binds specifically to 23S rRNA; its binding is stimulated by other ribosomal proteins, e.g. L4, L17, and L20. It is important during the early stages of 50S assembly. It makes multiple contacts with different domains of the 23S rRNA in the assembled 50S subunit and ribosome. In terms of biological role, the globular domain of the protein is located near the polypeptide exit tunnel on the outside of the subunit, while an extended beta-hairpin is found that lines the wall of the exit tunnel in the center of the 70S ribosome. In Chlorobium luteolum (strain DSM 273 / BCRC 81028 / 2530) (Pelodictyon luteolum), this protein is Large ribosomal subunit protein uL22.